The primary structure comprises 156 residues: Cyanate hydratase (156 aa).

Catalysis depends on residues Arg-96, Glu-99, and Ser-122.

This sequence belongs to the cyanase family.

It carries out the reaction cyanate + hydrogencarbonate + 3 H(+) = NH4(+) + 2 CO2. In terms of biological role, catalyzes the reaction of cyanate with bicarbonate to produce ammonia and carbon dioxide. In Pseudomonas paraeruginosa (strain DSM 24068 / PA7) (Pseudomonas aeruginosa (strain PA7)), this protein is Cyanate hydratase.